The sequence spans 27 residues: Augerpeptide hhe6.2 (27 aa).

3 cysteine pairs are disulfide-bonded: Cys-4/Cys-13, Cys-8/Cys-20, and Cys-12/Cys-27.

Expressed by the venom duct.

It localises to the secreted. The chain is Augerpeptide hhe6.2 from Hastula hectica (Sea snail).